The primary structure comprises 423 residues: Histone deacetylase 14, chloroplastic (423 aa).

The N-terminal 44 residues, 1 to 44 (MSMALIVRPFFVPGSAGISGSRNICKKNQWRKYLLKPSGSSINC), are a transit peptide targeting the chloroplast. A histone deacetylase region spans residues 62 to 392 (DARLIYSVSA…FRALLGEDSL (331 aa)). The active-site Proton donor/acceptor is the His202. Residues Asp239, His241, and Asp326 each coordinate Zn(2+).

This sequence belongs to the histone deacetylase family. Interacts with PP2A2. It depends on Zn(2+) as a cofactor. Expressed in stems, leaves, flowers, siliques and mature seeds.

The protein localises to the nucleus. It localises to the cytoplasm. The protein resides in the plastid. It is found in the chloroplast stroma. Its subcellular location is the mitochondrion. It carries out the reaction N-acetylserotonin + H2O = serotonin + acetate. It catalyses the reaction N-acetyltyramine + H2O = tyramine + acetate. The enzyme catalyses N-acetyltryptamine + H2O = tryptamine + acetate. The catalysed reaction is melatonin + H2O = 5-methoxytryptamine + acetate. Its activity is inhibited by trichostatin A (TSA), a known histone deacetylase inhibitor. In terms of biological role, regulates lysine acetylation levels of plastid proteins related to photosynthesis. Involved in the regulation of the activation state of RuBisCO, which is controlled by lysine acetylation of RuBisCO activase under low-light conditions. Associates with alpha- and beta-tubulins and deacetylate alpha-tubulin. Does not seem to be required for the cellular patterning in the root epidermis. Involved in the regulation of melatonin biosynthesis by catalyzing the deacetylation of N-acetylserotonin to produce serotonin. N-acetylserotonin is methylated by acetylserotonin O-methyltransferase (ASMT) to produce melatonin (N-acetyl-5-methoxytryptamine). Deacetylates melatonin to produce 5-methoxytryptamine. In vitro, deacetylates N-acetyltyramine and N-acetyltryptamine to produce tyramine and tryptamine, respectively. The chain is Histone deacetylase 14, chloroplastic from Arabidopsis thaliana (Mouse-ear cress).